A 406-amino-acid polypeptide reads, in one-letter code: Argininosuccinate synthase (406 aa).

Position 8-16 (8-16 (AYSGGLDTT)) interacts with ATP. L-citrulline contacts are provided by tyrosine 86 and serine 91. Glycine 116 serves as a coordination point for ATP. Threonine 118, asparagine 122, and aspartate 123 together coordinate L-aspartate. Asparagine 122 provides a ligand contact to L-citrulline. L-citrulline contacts are provided by arginine 126, serine 175, serine 184, glutamate 261, and tyrosine 273.

The protein belongs to the argininosuccinate synthase family. Type 1 subfamily. In terms of assembly, homotetramer.

It localises to the cytoplasm. It catalyses the reaction L-citrulline + L-aspartate + ATP = 2-(N(omega)-L-arginino)succinate + AMP + diphosphate + H(+). It functions in the pathway amino-acid biosynthesis; L-arginine biosynthesis; L-arginine from L-ornithine and carbamoyl phosphate: step 2/3. This chain is Argininosuccinate synthase, found in Brachyspira hyodysenteriae (strain ATCC 49526 / WA1).